Reading from the N-terminus, the 417-residue chain is Dihydroorotase (417 aa).

Zn(2+) is bound by residues H60 and H62. Substrate is bound by residues 62–64 (HLR) and N94. Zn(2+) contacts are provided by K138, H167, H207, and D275. K138 bears the N6-carboxylysine mark. D275 is a catalytic residue. Substrate is bound by residues H279 and 289-290 (AG).

Belongs to the metallo-dependent hydrolases superfamily. DHOase family. Class I DHOase subfamily. Zn(2+) is required as a cofactor.

It catalyses the reaction (S)-dihydroorotate + H2O = N-carbamoyl-L-aspartate + H(+). It functions in the pathway pyrimidine metabolism; UMP biosynthesis via de novo pathway; (S)-dihydroorotate from bicarbonate: step 3/3. In terms of biological role, catalyzes the reversible cyclization of carbamoyl aspartate to dihydroorotate. The sequence is that of Dihydroorotase from Pyrococcus horikoshii (strain ATCC 700860 / DSM 12428 / JCM 9974 / NBRC 100139 / OT-3).